The following is a 480-amino-acid chain: Aspartyl/glutamyl-tRNA(Asn/Gln) amidotransferase subunit B (480 aa).

This sequence belongs to the GatB/GatE family. GatB subfamily. In terms of assembly, heterotrimer of A, B and C subunits.

It catalyses the reaction L-glutamyl-tRNA(Gln) + L-glutamine + ATP + H2O = L-glutaminyl-tRNA(Gln) + L-glutamate + ADP + phosphate + H(+). It carries out the reaction L-aspartyl-tRNA(Asn) + L-glutamine + ATP + H2O = L-asparaginyl-tRNA(Asn) + L-glutamate + ADP + phosphate + 2 H(+). Functionally, allows the formation of correctly charged Asn-tRNA(Asn) or Gln-tRNA(Gln) through the transamidation of misacylated Asp-tRNA(Asn) or Glu-tRNA(Gln) in organisms which lack either or both of asparaginyl-tRNA or glutaminyl-tRNA synthetases. The reaction takes place in the presence of glutamine and ATP through an activated phospho-Asp-tRNA(Asn) or phospho-Glu-tRNA(Gln). This chain is Aspartyl/glutamyl-tRNA(Asn/Gln) amidotransferase subunit B, found in Streptococcus pneumoniae serotype 19F (strain G54).